The sequence spans 500 residues: Cytochrome P450 71B9 (500 aa).

A helical transmembrane segment spans residues 1 to 21 (MATIWFLSLLFLCCILLAAFK). A heme-binding site is contributed by Cys-440.

This sequence belongs to the cytochrome P450 family. Heme is required as a cofactor.

It localises to the membrane. This Arabidopsis thaliana (Mouse-ear cress) protein is Cytochrome P450 71B9 (CYP71B9).